The chain runs to 442 residues: tRNA modification GTPase MnmE (442 aa).

Residues Arg-24, Glu-84, and Arg-124 each contribute to the (6S)-5-formyl-5,6,7,8-tetrahydrofolate site. In terms of domain architecture, TrmE-type G spans 218–366; sequence GARVALFGPV…LRDDMLGRLW (149 aa). Residues 228–233, 247–253, and 272–275 each bind GTP; these read NAGKST, DDEPGTT, and DTAG. Mg(2+) is bound by residues Ser-232 and Thr-253. Lys-442 provides a ligand contact to (6S)-5-formyl-5,6,7,8-tetrahydrofolate.

It belongs to the TRAFAC class TrmE-Era-EngA-EngB-Septin-like GTPase superfamily. TrmE GTPase family. As to quaternary structure, homodimer. Heterotetramer of two MnmE and two MnmG subunits. K(+) serves as cofactor.

Its subcellular location is the cytoplasm. In terms of biological role, exhibits a very high intrinsic GTPase hydrolysis rate. Involved in the addition of a carboxymethylaminomethyl (cmnm) group at the wobble position (U34) of certain tRNAs, forming tRNA-cmnm(5)s(2)U34. This is tRNA modification GTPase MnmE from Myxococcus xanthus (strain DK1622).